The primary structure comprises 417 residues: DNA primase small subunit (417 aa).

Methionine 1 carries the post-translational modification N-acetylmethionine. Active-site residues include glutamate 44, aspartate 109, and aspartate 111. Residues aspartate 109 and aspartate 111 each contribute to the Mg(2+) site. Mn(2+) contacts are provided by aspartate 109 and aspartate 111. 109–111 (DID) is a binding site for a ribonucleoside 5'-triphosphate. Cysteine 121, cysteine 122, cysteine 128, and cysteine 131 together coordinate Zn(2+). The short motif at 121-131 (CCSSADICSKC) is the Zinc knuckle motif element. An a ribonucleoside 5'-triphosphate-binding site is contributed by 160-166 (SGRRGVH). Aspartate 305 is a binding site for Mg(2+). Aspartate 305 is a binding site for Mn(2+). Residues 314–317 (HLLK) and histidine 323 contribute to the a ribonucleoside 5'-triphosphate site.

Belongs to the eukaryotic-type primase small subunit family. In terms of assembly, heterodimer of a catalytic subunit PRIM1 and a regulatory subunit PRIM2, also known as the DNA primase complex. Interacts with PRIM2/p58 (via C-terminus). Component of the alpha DNA polymerase complex (also known as the alpha DNA polymerase-primase complex) consisting of four subunits: the catalytic subunit POLA1, the regulatory subunit POLA2, and the primase complex subunits PRIM1 and PRIM2 respectively. Within the complex, POLA1 directly interacts with PRIM2. It depends on Mg(2+) as a cofactor. Mn(2+) serves as cofactor.

It carries out the reaction ssDNA + n NTP = ssDNA/pppN(pN)n-1 hybrid + (n-1) diphosphate.. With respect to regulation, the presence of the regulatory subunit PRIM2/p58 accelerates the kinetics of initiation and primer extension. Catalytic subunit of the DNA primase complex and component of the DNA polymerase alpha complex (also known as the alpha DNA polymerase-primase complex) which play an essential role in the initiation of DNA synthesis. During the S phase of the cell cycle, the DNA polymerase alpha complex (composed of a catalytic subunit POLA1, an accessory subunit POLA2 and two primase subunits, the catalytic subunit PRIM1 and the regulatory subunit PRIM2) is recruited to DNA at the replicative forks via direct interactions with MCM10 and WDHD1. The primase subunit of the polymerase alpha complex initiates DNA synthesis by oligomerising short RNA primers on both leading and lagging strands. These primers are initially extended by the polymerase alpha catalytic subunit and subsequently transferred to polymerase delta and polymerase epsilon for processive synthesis on the lagging and leading strand, respectively. In the primase complex, both subunits are necessary for the initial di-nucleotide formation, but the extension of the primer depends only on the catalytic subunit. Can add both ribo- and deoxynucleotides during elongation of the primers. Synthesizes 9-mer RNA primers (also known as the 'unit length' RNA primers). Incorporates only ribonucleotides in the presence of ribo- and deoxy-nucleotide triphosphates (rNTPs, dNTPs). Requires template thymine or cytidine to start the RNA primer synthesis, with an adenine or guanine at its 5'-end. Binds single stranded DNA. This is DNA primase small subunit (Prim1) from Mus musculus (Mouse).